The following is a 362-amino-acid chain: UDP-N-acetylglucosamine--N-acetylmuramyl-(pentapeptide) pyrophosphoryl-undecaprenol N-acetylglucosamine transferase (362 aa).

UDP-N-acetyl-alpha-D-glucosamine contacts are provided by residues 15-17 (TGG), asparagine 127, arginine 165, serine 191, isoleucine 247, 266-271 (ALTVSE), and glutamine 292.

Belongs to the glycosyltransferase 28 family. MurG subfamily.

The protein resides in the cell inner membrane. It carries out the reaction di-trans,octa-cis-undecaprenyl diphospho-N-acetyl-alpha-D-muramoyl-L-alanyl-D-glutamyl-meso-2,6-diaminopimeloyl-D-alanyl-D-alanine + UDP-N-acetyl-alpha-D-glucosamine = di-trans,octa-cis-undecaprenyl diphospho-[N-acetyl-alpha-D-glucosaminyl-(1-&gt;4)]-N-acetyl-alpha-D-muramoyl-L-alanyl-D-glutamyl-meso-2,6-diaminopimeloyl-D-alanyl-D-alanine + UDP + H(+). It functions in the pathway cell wall biogenesis; peptidoglycan biosynthesis. Cell wall formation. Catalyzes the transfer of a GlcNAc subunit on undecaprenyl-pyrophosphoryl-MurNAc-pentapeptide (lipid intermediate I) to form undecaprenyl-pyrophosphoryl-MurNAc-(pentapeptide)GlcNAc (lipid intermediate II). The polypeptide is UDP-N-acetylglucosamine--N-acetylmuramyl-(pentapeptide) pyrophosphoryl-undecaprenol N-acetylglucosamine transferase (Shewanella sp. (strain ANA-3)).